The primary structure comprises 644 residues: uncharacterized protein (644 aa).

Residues 16–38 form a helical membrane-spanning segment; that stretch reads LLSYLGVVGVGIAGLCIYRSVWG. The segment covering 586-603 has biased composition (basic and acidic residues); sequence VRQLQKEAGEGEAEEHPR. The disordered stretch occupies residues 586-613; sequence VRQLQKEAGEGEAEEHPRARPAAGKAQR.

Its subcellular location is the membrane. This is an uncharacterized protein from Treponema pallidum (strain Nichols).